A 294-amino-acid chain; its full sequence is Large ribosomal subunit protein uL2 (294 aa).

Disordered regions lie at residues 1 to 37 (MGIR…RPEK) and 228 to 294 (GSVM…RAAQ). The segment covering 10–22 (TPSTRHMTVSNFE) has biased composition (polar residues). A compositionally biased stretch (basic and acidic residues) spans 23 to 37 (ELSRDENGKRPRPEK). Over residues 264–285 (KTRKRNKPSNKFIVRGRRRGGR) the composition is skewed to basic residues.

It belongs to the universal ribosomal protein uL2 family. As to quaternary structure, part of the 50S ribosomal subunit. Forms a bridge to the 30S subunit in the 70S ribosome.

Its function is as follows. One of the primary rRNA binding proteins. Required for association of the 30S and 50S subunits to form the 70S ribosome, for tRNA binding and peptide bond formation. It has been suggested to have peptidyltransferase activity; this is somewhat controversial. Makes several contacts with the 16S rRNA in the 70S ribosome. The polypeptide is Large ribosomal subunit protein uL2 (Synechococcus sp. (strain JA-3-3Ab) (Cyanobacteria bacterium Yellowstone A-Prime)).